The sequence spans 213 residues: MKEIVTIENVSFNYRNRAVFKDFNLSIEKGDFLCVLGESGSGKSTLLGLILGLLKPSLGSVKIFNETLSNNAFLRQKIGYIAQGNSLFSHLNALQNMTFCLNLQGINKQAAQKEAKALALKMGLDESLMDKFPNELSGGQAQRVGIIRGIIHKPELILLDEPFSALDSFNRKNLQDLIKEIHQNSCATFIMVTHDEEEAQKLATKTLEIKALK.

Residues 5–212 (VTIENVSFNY…ATKTLEIKAL (208 aa)) enclose the ABC transporter domain. Position 37-44 (37-44 (GESGSGKS)) interacts with ATP.

It belongs to the ABC transporter superfamily. The complex is composed of two ATP-binding proteins (EgtV) and two transmembrane proteins (EgtU).

Its subcellular location is the cell inner membrane. It carries out the reaction ergothioneine(out) + ATP + H2O = ergothioneine(in) + ADP + phosphate + H(+). Its function is as follows. Part of the ABC transporter complex EgtUV involved in the uptake of ergothioneine (EGT), a natural low-molecular weight (LMW) thiol antioxidant which protects H.pylori against bleach stress. Responsible for energy coupling to the transport system. The protein is Ergothioneine transport ATP-binding protein EgtV of Helicobacter pylori (strain G27).